A 275-amino-acid chain; its full sequence is Probable ABC transporter permease protein NosY (275 aa).

A run of 6 helical transmembrane segments spans residues 20-40 (WLLA…WFGA), 60-80 (SLAT…AIVG), 111-131 (ILAL…LALV), 146-166 (FMGS…ALSS), 179-199 (LGLW…ILVL), and 250-270 (ALWL…HGLF).

As to quaternary structure, the complex may be composed of an ATP-binding protein (NosF), a transmembrane protein (NosY) and a solute-binding protein (NosD).

It localises to the cell inner membrane. Its function is as follows. Required for the assembly of the copper chromophores of nitrous oxide reductase. Could be part of the ABC transporter complex NosDFY. In Pseudomonas aeruginosa (strain ATCC 15692 / DSM 22644 / CIP 104116 / JCM 14847 / LMG 12228 / 1C / PRS 101 / PAO1), this protein is Probable ABC transporter permease protein NosY (nosY).